The chain runs to 426 residues: Ubiquitin carboxyl-terminal hydrolase 46 (426 aa).

A lipid anchor (N-myristoyl glycine) is attached at G2. In terms of domain architecture, USP spans 27–406; sequence YGLVNFGNTC…SAYILFYQAR (380 aa). Catalysis depends on C36, which acts as the Nucleophile. Residues 162–181 are disordered; sequence TAGLPRSDEKGTSERNGGIT. The active-site Proton acceptor is H342.

Belongs to the peptidase C19 family. Interacts with wdr-20 and wdr-48; the catalytic activity of usp-46 is increased in the presence of both wdr-20 and wdr-48. Interacts with glr-1; the interaction results in deubiquitination of glr-1. In terms of tissue distribution, expressed in a number of tissues including the nervous system, pharynx, body wall muscle, vulva muscle and intestine and is detected in many head and ventral cord neurons.

It localises to the perikaryon. The protein localises to the cytoplasm. The enzyme catalyses Thiol-dependent hydrolysis of ester, thioester, amide, peptide and isopeptide bonds formed by the C-terminal Gly of ubiquitin (a 76-residue protein attached to proteins as an intracellular targeting signal).. Regulates the abundance of the glr-1 glutamate receptor in the ventral nerve cord by promoting its deubiquitination and preventing its degradation in the lysosome. Contributes to the regulation of embryonic polarity. This chain is Ubiquitin carboxyl-terminal hydrolase 46 (usp-46), found in Caenorhabditis elegans.